Consider the following 1717-residue polypeptide: Protein MON2 homolog (1717 aa).

An N-acetylserine modification is found at serine 2. Phosphoserine is present on residues serine 205 and serine 537. A disordered region spans residues 511-538; sequence ETECQTTTEEGSSPTQSTEQQDLQSTSD. Positions 522-538 are enriched in polar residues; the sequence is SSPTQSTEQQDLQSTSD.

It belongs to the MON2 family. In terms of assembly, homooligomer. Heterotrimer with ATP9A and DOP1B; this interaction is retromer-independent. Interacts with SNX3.

It localises to the early endosome membrane. Functionally, plays a role in regulating membrane trafficking of cargo proteins. Together with ATP9A and DOP1B, regulates SNX3 retromer-mediated endosomal sorting of WLS away from lysosomal degradation. In Homo sapiens (Human), this protein is Protein MON2 homolog.